Here is a 329-residue protein sequence, read N- to C-terminus: rRNA 2'-O-methyltransferase fibrillarin (329 aa).

The segment at 1 to 85 is disordered; it reads MAFGAPRGRG…GGARGGARGG (85 aa). The span at 13-84 shows a compositional bias: gly residues; it reads RGGFGGRGGS…RGGARGGARG (72 aa). S-adenosyl-L-methionine is bound by residues 181–182, 200–201, 225–226, and 245–248; these read TS, EF, DA, and DVAQ.

It belongs to the methyltransferase superfamily. Fibrillarin family. As to quaternary structure, component of box C/D small nucleolar ribonucleoprotein (snoRNP) particles that contain SNU13, NOP1, SIK1/NOP56 and NOP58, plus a guide RNA. By homology to other fibrillarins, some or all of the N-terminal domain arginines are modified to asymmetric dimethylarginine (DMA).

It is found in the nucleus. The protein localises to the nucleolus. The enzyme catalyses L-glutaminyl-[histone H2A] + S-adenosyl-L-methionine = N(5)-methyl-L-glutaminyl-[histone H2A] + S-adenosyl-L-homocysteine + H(+). In terms of biological role, S-adenosyl-L-methionine-dependent methyltransferase that has the ability to methylate both RNAs and proteins. Involved in pre-rRNA processing. Utilizes the methyl donor S-adenosyl-L-methionine to catalyze the site-specific 2'-hydroxyl methylation of ribose moieties in pre-ribosomal RNA. Site specificity is provided by a guide RNA that base pairs with the substrate. Methylation occurs at a characteristic distance from the sequence involved in base pairing with the guide RNA. Also acts as a protein methyltransferase by mediating methylation of 'Gln-105' of histone H2A (H2AQ105me), a modification that impairs binding of the FACT complex and is specifically present at 35S ribosomal DNA locus. The polypeptide is rRNA 2'-O-methyltransferase fibrillarin (NOP1) (Debaryomyces hansenii (strain ATCC 36239 / CBS 767 / BCRC 21394 / JCM 1990 / NBRC 0083 / IGC 2968) (Yeast)).